The chain runs to 163 residues: Transcription elongation factor GreA (163 aa).

Positions 49 to 80 (ENAEYDAARDRQSEVERRILELERILENAEII) form a coiled coil.

This sequence belongs to the GreA/GreB family.

Its function is as follows. Necessary for efficient RNA polymerase transcription elongation past template-encoded arresting sites. The arresting sites in DNA have the property of trapping a certain fraction of elongating RNA polymerases that pass through, resulting in locked ternary complexes. Cleavage of the nascent transcript by cleavage factors such as GreA or GreB allows the resumption of elongation from the new 3'terminus. GreA releases sequences of 2 to 3 nucleotides. The protein is Transcription elongation factor GreA of Mycoplasmopsis agalactiae (strain NCTC 10123 / CIP 59.7 / PG2) (Mycoplasma agalactiae).